The sequence spans 358 residues: Phenylalanine--tRNA ligase alpha subunit (358 aa).

Glu-279 serves as a coordination point for Mg(2+).

The protein belongs to the class-II aminoacyl-tRNA synthetase family. Phe-tRNA synthetase alpha subunit type 1 subfamily. Tetramer of two alpha and two beta subunits. Requires Mg(2+) as cofactor.

The protein localises to the cytoplasm. The catalysed reaction is tRNA(Phe) + L-phenylalanine + ATP = L-phenylalanyl-tRNA(Phe) + AMP + diphosphate + H(+). In Variovorax paradoxus (strain S110), this protein is Phenylalanine--tRNA ligase alpha subunit.